Reading from the N-terminus, the 145-residue chain is D-aminoacyl-tRNA deacylase (145 aa).

Residues 137 to 138 (GP) carry the Gly-cisPro motif, important for rejection of L-amino acids motif.

Belongs to the DTD family. In terms of assembly, homodimer.

It localises to the cytoplasm. The enzyme catalyses glycyl-tRNA(Ala) + H2O = tRNA(Ala) + glycine + H(+). It catalyses the reaction a D-aminoacyl-tRNA + H2O = a tRNA + a D-alpha-amino acid + H(+). In terms of biological role, an aminoacyl-tRNA editing enzyme that deacylates mischarged D-aminoacyl-tRNAs. Also deacylates mischarged glycyl-tRNA(Ala), protecting cells against glycine mischarging by AlaRS. Acts via tRNA-based rather than protein-based catalysis; rejects L-amino acids rather than detecting D-amino acids in the active site. By recycling D-aminoacyl-tRNA to D-amino acids and free tRNA molecules, this enzyme counteracts the toxicity associated with the formation of D-aminoacyl-tRNA entities in vivo and helps enforce protein L-homochirality. This is D-aminoacyl-tRNA deacylase from Idiomarina loihiensis (strain ATCC BAA-735 / DSM 15497 / L2-TR).